Reading from the N-terminus, the 412-residue chain is Transforming growth factor beta-3 proprotein (412 aa).

Positions 1–23 (MKMHLQRALVVLALLNFATVSLS) are cleaved as a signal peptide. N-linked (GlcNAc...) asparagine glycosylation is found at Asn74, Asn135, and Asn142. The Cell attachment site motif lies at 261–263 (RGD). The residue at position 293 (Gln293) is an N5-methylglutamine. Disulfide bonds link Cys307–Cys316, Cys315–Cys378, Cys344–Cys409, and Cys348–Cys411.

This sequence belongs to the TGF-beta family. In terms of assembly, interacts with ASPN. Latency-associated peptide: Homodimer; disulfide-linked. Latency-associated peptide: Interacts with Transforming growth factor beta-3 (TGF-beta-3) chain; interaction is non-covalent and maintains (TGF-beta-3) in a latent state. Latency-associated peptide: Interacts with LRRC32/GARP; leading to regulate activation of TGF-beta-3 and promote epithelial fusion during palate development. Latency-associated peptide: Interacts (via cell attachment site) with integrins, leading to release of the active TGF-beta-3. Transforming growth factor beta-3: Homodimer; disulfide-linked. Transforming growth factor beta-3: Interacts with TGF-beta receptors (TGFBR1 and TGFBR2), leading to signal transduction. In terms of processing, transforming growth factor beta-3 proprotein: The precursor proprotein is cleaved in the Golgi apparatus to form Transforming growth factor beta-3 (TGF-beta-3) and Latency-associated peptide (LAP) chains, which remain non-covalently linked, rendering TGF-beta-3 inactive. Methylated at Gln-293 by N6AMT1.

The protein resides in the secreted. Its subcellular location is the extracellular space. It is found in the extracellular matrix. Its function is as follows. Transforming growth factor beta-3 proprotein: Precursor of the Latency-associated peptide (LAP) and Transforming growth factor beta-3 (TGF-beta-3) chains, which constitute the regulatory and active subunit of TGF-beta-3, respectively. In terms of biological role, required to maintain the Transforming growth factor beta-3 (TGF-beta-3) chain in a latent state during storage in extracellular matrix. Associates non-covalently with TGF-beta-3 and regulates its activation via interaction with 'milieu molecules', such as LTBP1 and LRRC32/GARP, that control activation of TGF-beta-3. Interaction with integrins results in distortion of the Latency-associated peptide chain and subsequent release of the active TGF-beta-3. Transforming growth factor beta-3: Multifunctional protein that regulates embryogenesis and cell differentiation and is required in various processes such as secondary palate development. Activation into mature form follows different steps: following cleavage of the proprotein in the Golgi apparatus, Latency-associated peptide (LAP) and Transforming growth factor beta-3 (TGF-beta-3) chains remain non-covalently linked rendering TGF-beta-3 inactive during storage in extracellular matrix. At the same time, LAP chain interacts with 'milieu molecules', such as LTBP1 and LRRC32/GARP that control activation of TGF-beta-3 and maintain it in a latent state during storage in extracellular milieus. TGF-beta-3 is released from LAP by integrins: integrin-binding results in distortion of the LAP chain and subsequent release of the active TGF-beta-3. Once activated following release of LAP, TGF-beta-3 acts by binding to TGF-beta receptors (TGFBR1 and TGFBR2), which transduce signal. The chain is Transforming growth factor beta-3 proprotein (TGFB3) from Homo sapiens (Human).